We begin with the raw amino-acid sequence, 504 residues long: Putative glycerol-3-phosphate transporter 2 (504 aa).

12 helical membrane-spanning segments follow: residues 31–51 (LSFKQYQALVFILTFVAYIAF), 84–104 (ALLGQIDLAFLSVYAVGMFVA), 116–136 (FLTIGMIGTGLFTALFGVAFW), 145–165 (FLAVQVMAGLFQSIGWPCIVA), 178–198 (MIMGVWSAHTSLGNIAGSLIA), 210–230 (FLGPAFLMTFLGIVVYLFLPV), 280–302 (IPGVAPFAFCLFFTKLVSYTFLY), 324–344 (GNLSTIFDVGGVVGGVLAGYI), 352–372 (AITAAGFMYLAIPALFLYRVF), 378–398 (TINVILMFTSGVFIIGPFALI), 424–444 (AIIDGTGSVGAAIGPVLTGYI), and 452–472 (VFYMLMTAALISGLLLTKLII).

The protein belongs to the major facilitator superfamily. Organophosphate:Pi antiporter (OPA) (TC 2.A.1.4) family. Expressed in the root-hair differentiation zone.

The protein localises to the membrane. This Arabidopsis thaliana (Mouse-ear cress) protein is Putative glycerol-3-phosphate transporter 2.